Here is a 59-residue protein sequence, read N- to C-terminus: Large ribosomal subunit protein bL32 (59 aa).

Positions 1–34 are disordered; that stretch reads MAVQKSKVTRSRRGQRRSHDALTGPTLSVDKTTG. Basic residues predominate over residues 7-16; the sequence is KVTRSRRGQR.

The protein belongs to the bacterial ribosomal protein bL32 family.

This chain is Large ribosomal subunit protein bL32, found in Marinomonas sp. (strain MWYL1).